Consider the following 1845-residue polypeptide: Proteasome activator complex subunit 4 (1845 aa).

Basic and acidic residues predominate over residues Met1–Leu13. Residues Met1 to Phe26 are disordered. 2 HEAT repeats span residues Pro475–Cys519 and Asn1000–Gly1039. Ser1123 carries the post-translational modification Phosphoserine. HEAT repeat units lie at residues Arg1181–Arg1219 and Asp1356–His1394. Ser1616 is modified (phosphoserine). HEAT repeat units follow at residues Pro1638–Phe1676 and Glu1682–Leu1720. The bromodomain-like (BRDL) stretch occupies residues Ala1652–Lys1740.

Belongs to the BLM10 family. As to quaternary structure, homodimer. Component of the spermatoproteasome, a form of the proteasome specifically found in testis. Interacts with the 20S and 26S proteasomes. In terms of processing, phosphorylated.

It localises to the cytoplasm. The protein localises to the cytosol. Its subcellular location is the nucleus. The protein resides in the nucleus speckle. Its function is as follows. Associated component of the proteasome that specifically recognizes acetylated histones and promotes ATP- and ubiquitin-independent degradation of core histones during spermatogenesis and DNA damage response. Recognizes and binds acetylated histones via its bromodomain-like (BRDL) region and activates the proteasome by opening the gated channel for substrate entry. Binds to the core proteasome via its C-terminus, which occupies the same binding sites as the proteasomal ATPases, opening the closed structure of the proteasome via an active gating mechanism. Component of the spermatoproteasome, a form of the proteasome specifically found in testis: binds to acetylated histones and promotes degradation of histones, thereby participating actively to the exchange of histones during spermatogenesis. Also involved in DNA damage response in somatic cells, by promoting degradation of histones following DNA double-strand breaks. This chain is Proteasome activator complex subunit 4 (PSME4), found in Bos taurus (Bovine).